The following is a 459-amino-acid chain: Cysteine--tRNA ligase (459 aa).

Cys-28 is a binding site for Zn(2+). Positions 30-40 match the 'HIGH' region motif; the sequence is ITIYDLCHIGH. Zn(2+)-binding residues include Cys-209, His-234, and Glu-238. Residues 266-270 carry the 'KMSKS' region motif; sequence KMSKS. Lys-269 is an ATP binding site.

The protein belongs to the class-I aminoacyl-tRNA synthetase family. In terms of assembly, monomer. Zn(2+) is required as a cofactor.

The protein localises to the cytoplasm. The catalysed reaction is tRNA(Cys) + L-cysteine + ATP = L-cysteinyl-tRNA(Cys) + AMP + diphosphate. The chain is Cysteine--tRNA ligase from Shewanella denitrificans (strain OS217 / ATCC BAA-1090 / DSM 15013).